A 251-amino-acid chain; its full sequence is Hydroxyacylglutathione hydrolase (251 aa).

Residues His53, His55, Asp57, His58, His110, Asp127, and His165 each contribute to the Zn(2+) site.

Belongs to the metallo-beta-lactamase superfamily. Glyoxalase II family. In terms of assembly, monomer. Zn(2+) serves as cofactor.

The enzyme catalyses an S-(2-hydroxyacyl)glutathione + H2O = a 2-hydroxy carboxylate + glutathione + H(+). It participates in secondary metabolite metabolism; methylglyoxal degradation; (R)-lactate from methylglyoxal: step 2/2. In terms of biological role, thiolesterase that catalyzes the hydrolysis of S-D-lactoyl-glutathione to form glutathione and D-lactic acid. The chain is Hydroxyacylglutathione hydrolase from Buchnera aphidicola subsp. Acyrthosiphon pisum (strain APS) (Acyrthosiphon pisum symbiotic bacterium).